A 407-amino-acid chain; its full sequence is MMPLTAAREFMRLLTGRFLATRCPQVAGSLAFTTLLAIVPLLTVIIALFSNFPAFSRLGESLRTFLLENLLPDRAGQIIATYAFQFSQQAAGLTLIGTVLLVLTALMLLMTIDHVFNHIWGVRRPRPLLTRLMVHWFALTLGPLALGGSVLATGHLVATSIALAGEGSWVGATFARLVPTVLLGSLFSVLYYAVPNHPVRMLHALAGGIAAAIVFVLMQRLFGLFIVRIPTYTLIYGTFAVLPIFLVWLYLSWVVILLGAALSATLPSFFERARILRAFPGDRAWAAVTMLIALADAQHAGTTLPFATLQAGARVSSNEGEALLGEMRDAGWVAHTEEGNWLLSRQAAQIGLAAVVNRFALSPAAWREASDGDEASRRIAERLATALHSADLPLSALTSAGNRVQTG.

6 consecutive transmembrane segments (helical) span residues S29–F49, G92–I112, L132–A152, F174–V194, G207–V227, and F239–G259.

The protein belongs to the UPF0761 family.

It localises to the cell inner membrane. The chain is UPF0761 membrane protein AZOSEA40600 from Aromatoleum aromaticum (strain DSM 19018 / LMG 30748 / EbN1) (Azoarcus sp. (strain EbN1)).